The chain runs to 470 residues: SHUGOSHIN 2 (470 aa).

Residues 72-113 (IQKLRINLRSVQEKNLQLAQANSQMLAELNTNRDRLKDLQHE) are a coiled coil. Composition is skewed to basic and acidic residues over residues 131–143 (VLPRTHHESKDKV) and 150–162 (GDCKSFQVHDIKH). 2 disordered regions span residues 131–176 (VLPR…IKSS) and 358–470 (ESAG…RRKC). Over residues 163-172 (KDTKRKRTTR) the composition is skewed to basic residues. Basic and acidic residues predominate over residues 370–381 (SESRHETKEITR). Positions 382–392 (KRSFSTRRQST) are enriched in basic residues. 3 stretches are compositionally biased toward basic and acidic residues: residues 396–406 (SQTDEAIKEIA), 423–438 (TESKDKPKADENEGMT), and 449–462 (HAAEKVQSYREVSL).

Belongs to the shugoshin family.

Functionally, dispensable for both meiotic and mitotic cell cycle progression. Required with SGO1 for full protection of centromeric cohesion during anaphase I. Required to prevent precocious release of pericentromeric cohesins during meiosis. Acts redundantly to SGO1. The polypeptide is SHUGOSHIN 2 (Arabidopsis thaliana (Mouse-ear cress)).